The primary structure comprises 310 residues: O-acetylserine sulfhydrylase (310 aa).

An N6-(pyridoxal phosphate)lysine modification is found at lysine 44. Pyridoxal 5'-phosphate contacts are provided by residues asparagine 74, 178 to 182, and serine 266; that span reads GTGGT.

Belongs to the cysteine synthase/cystathionine beta-synthase family. In terms of assembly, homodimer. It depends on pyridoxal 5'-phosphate as a cofactor.

The enzyme catalyses O-acetyl-L-serine + hydrogen sulfide = L-cysteine + acetate. Its pathway is amino-acid biosynthesis; L-cysteine biosynthesis; L-cysteine from L-serine: step 2/2. Its function is as follows. Catalyzes the conversion of O-acetylserine (OAS) to cysteine through the elimination of acetate and addition of hydrogen sulfide. This is O-acetylserine sulfhydrylase (cysK) from Mycobacterium bovis (strain ATCC BAA-935 / AF2122/97).